The sequence spans 239 residues: U-scoloptoxin(11)-Sm3a (239 aa).

The first 16 residues, 1-16 (MINFLLLVLILSVLES), serve as a signal peptide directing secretion.

This sequence belongs to the scoloptoxin-11 family. In terms of processing, contains 9 disulfide bonds. Expressed by the venom gland.

It localises to the secreted. The chain is U-scoloptoxin(11)-Sm3a from Scolopendra morsitans (Tanzanian blue ringleg centipede).